The primary structure comprises 397 residues: Diphosphomevalonate decarboxylase (397 aa).

(R)-5-diphosphomevalonate-binding positions include 19–22 (YWGK), Arg74, 153–158 (SGSACR), and Thr209. The segment at 378-397 (GPGPQDTKSSLIDPETGLPR) is disordered.

Belongs to the diphosphomevalonate decarboxylase family. Homodimer.

The enzyme catalyses (R)-5-diphosphomevalonate + ATP = isopentenyl diphosphate + ADP + phosphate + CO2. It participates in isoprenoid biosynthesis; isopentenyl diphosphate biosynthesis via mevalonate pathway; isopentenyl diphosphate from (R)-mevalonate: step 3/3. Functionally, diphosphomevalonate decarboxylase; part of the second module of ergosterol biosynthesis pathway that includes the middle steps of the pathway. The second module is carried out in the vacuole and involves the formation of farnesyl diphosphate, which is also an important intermediate in the biosynthesis of ubiquinone, dolichol, heme and prenylated proteins. Activity by the mevalonate kinase ERG12 first converts mevalonate into 5-phosphomevalonate. 5-phosphomevalonate is then further converted to 5-diphosphomevalonate by the phosphomevalonate kinase ERG8. The diphosphomevalonate decarboxylase MVD1/ERG19 then produces isopentenyl diphosphate. The isopentenyl-diphosphate delta-isomerase IDI1 then catalyzes the 1,3-allylic rearrangement of the homoallylic substrate isopentenyl (IPP) to its highly electrophilic allylic isomer, dimethylallyl diphosphate (DMAPP). Finally the farnesyl diphosphate synthase ERG20 catalyzes the sequential condensation of isopentenyl pyrophosphate with dimethylallyl pyrophosphate, and then with the resultant geranylpyrophosphate to the ultimate product farnesyl pyrophosphate. This chain is Diphosphomevalonate decarboxylase, found in Eremothecium gossypii (strain ATCC 10895 / CBS 109.51 / FGSC 9923 / NRRL Y-1056) (Yeast).